A 394-amino-acid chain; its full sequence is Actin-related protein 2 (394 aa).

M1 is modified (N-acetylmethionine). ATP contacts are provided by residues 160–162 (GDG) and 214–218 (RMIKE). K299 carries the post-translational modification N6-acetyllysine. 305 to 310 (GGSTMY) contributes to the ATP binding site. N6-acetyllysine is present on K322.

The protein belongs to the actin family. ARP2 subfamily. Component of the Arp2/3 complex composed of ACTR2/ARP2, ACTR3/ARP3, ARPC1B/p41-ARC, ARPC2/p34-ARC, ARPC3/p21-ARC, ARPC4/p20-ARC and ARPC5/p16-ARC. Interacts with AVIL.

Its subcellular location is the cytoplasm. The protein resides in the cytoskeleton. It localises to the cell projection. It is found in the nucleus. Functionally, ATP-binding component of the Arp2/3 complex, a multiprotein complex that mediates actin polymerization upon stimulation by nucleation-promoting factor (NPF). The Arp2/3 complex mediates the formation of branched actin networks in the cytoplasm, providing the force for cell motility. Seems to contact the pointed end of the daughter actin filament. In podocytes, required for the formation of lamellipodia downstream of AVIL and PLCE1 regulation. In addition to its role in the cytoplasmic cytoskeleton, the Arp2/3 complex also promotes actin polymerization in the nucleus, thereby regulating gene transcription and repair of damaged DNA. The Arp2/3 complex promotes homologous recombination (HR) repair in response to DNA damage by promoting nuclear actin polymerization, leading to drive motility of double-strand breaks (DSBs). In Bos taurus (Bovine), this protein is Actin-related protein 2 (ACTR2).